A 158-amino-acid polypeptide reads, in one-letter code: 6,7-dimethyl-8-ribityllumazine synthase (158 aa).

5-amino-6-(D-ribitylamino)uracil contacts are provided by residues F22, 57-59, and 81-83; these read SYE and TVI. The active-site Proton donor is H89. A 5-amino-6-(D-ribitylamino)uracil-binding site is contributed by F114. R128 serves as a coordination point for (2S)-2-hydroxy-3-oxobutyl phosphate.

Belongs to the DMRL synthase family. Forms an icosahedral capsid composed of 60 subunits, arranged as a dodecamer of pentamers.

The enzyme catalyses (2S)-2-hydroxy-3-oxobutyl phosphate + 5-amino-6-(D-ribitylamino)uracil = 6,7-dimethyl-8-(1-D-ribityl)lumazine + phosphate + 2 H2O + H(+). It functions in the pathway cofactor biosynthesis; riboflavin biosynthesis; riboflavin from 2-hydroxy-3-oxobutyl phosphate and 5-amino-6-(D-ribitylamino)uracil: step 1/2. Its function is as follows. Catalyzes the formation of 6,7-dimethyl-8-ribityllumazine by condensation of 5-amino-6-(D-ribitylamino)uracil with 3,4-dihydroxy-2-butanone 4-phosphate. This is the penultimate step in the biosynthesis of riboflavin. In Blochmanniella pennsylvanica (strain BPEN), this protein is 6,7-dimethyl-8-ribityllumazine synthase.